We begin with the raw amino-acid sequence, 168 residues long: MADPHIKSPMDFLDYLTVIIYRTGFVIAALAVLTVSWYPDLSLTFILIAATCCASSLHIYLKSFRLLFQFATWIGLLFYINHYPALALGGALLTLGGLCFKEYFCFRVPLLNLQPIFVACLWFSWVLNNLIALRIFSIISGVLLLVLAIQKWRMPLHFDIGDKTKYQI.

5 consecutive transmembrane segments (helical) span residues 15 to 33, 41 to 57, 73 to 93, 108 to 128, and 129 to 149; these read YLTVIIYRTGFVIAALAVL, LSLTFILIAATCCASSL, WIGLLFYINHYPALALGGALL, VPLLNLQPIFVACLWFSWVLN, and NLIALRIFSIISGVLLLVLAI.

It localises to the cell membrane. This is an uncharacterized protein from Haemophilus influenzae (strain ATCC 51907 / DSM 11121 / KW20 / Rd).